Consider the following 382-residue polypeptide: F-box/LRR-repeat/kelch-repeat protein At1g09650 (382 aa).

Residues 7 to 52 form the F-box domain; sequence CLMMESLPHEVVECILERLDADPLLRFKAVSKQWKSTIESPFFQRR. Residues 78-101 form an LRR 1 repeat; it reads IEALTTLVLGSSSSVKIPTPWEEE. The Kelch 1 repeat unit spans residues 180–227; the sequence is PVWLYNSIEIGLENATTCEVFDFSTNAWRYVSPAAPYRIVGCPAPVCV. One copy of the LRR 2 repeat lies at 239-262; that stretch reads ETKILSFDLHTETFQVVSKAPFAN. Residues 270 to 319 form a Kelch 2 repeat; the sequence is MCNLDNRLCVSEMKLPNQVIWSFNSGNKTWHKMCSINLDITSRWFGPTQV.

In Arabidopsis thaliana (Mouse-ear cress), this protein is F-box/LRR-repeat/kelch-repeat protein At1g09650.